The primary structure comprises 201 residues: MPSLPPQRAAVLAFLQEQAQAGVSPSLAEIAQAFGFASRNAAQKHVQALADAGLIELLPNQKRGIRLPGGAGRDALLALPVLGRVAAGLPIGADIGLERQLWLDRALFSLRPDYLLQVQGDSMIDDGILDGDLVGVHRSNEARDGQIVVARVDGEITIKRLERGAERIRLLPRNRAHAPIVVAADADFAIEGLYCGLIRQG.

Positions 27 to 47 (LAEIAQAFGFASRNAAQKHVQ) form a DNA-binding region, H-T-H motif. Active-site for autocatalytic cleavage activity residues include S122 and K159.

This sequence belongs to the peptidase S24 family. Homodimer.

The enzyme catalyses Hydrolysis of Ala-|-Gly bond in repressor LexA.. Functionally, represses a number of genes involved in the response to DNA damage (SOS response), including recA and lexA. In the presence of single-stranded DNA, RecA interacts with LexA causing an autocatalytic cleavage which disrupts the DNA-binding part of LexA, leading to derepression of the SOS regulon and eventually DNA repair. In Xanthomonas axonopodis pv. citri (strain 306), this protein is LexA repressor 1.